The chain runs to 861 residues: Rod cGMP-specific 3',5'-cyclic phosphodiesterase subunit alpha (861 aa).

G2 is modified (N-acetylglycine). 2 GAF domains span residues 73 to 222 (QAER…NLIM) and 254 to 431 (DIER…GWSV). Residues 483-816 (EEEELAEILQ…KEWKALADEY (334 aa)) form the PDEase domain. The active-site Proton donor is H559. 4 residues coordinate a divalent metal cation: H563, H599, D600, and D720. The interval 821–861 (KALEEEKQKQQTAKQGAAGDQPGGNPSPAGGAPASKSCCIQ) is disordered. Positions 830 to 861 (QQTAKQGAAGDQPGGNPSPAGGAPASKSCCIQ) are enriched in low complexity. A Cysteine methyl ester modification is found at C858. C858 carries the S-farnesyl cysteine lipid modification. Residues 859-861 (CIQ) constitute a propeptide, removed in mature form.

This sequence belongs to the cyclic nucleotide phosphodiesterase family. Oligomer composed of two catalytic chains (alpha and beta), an inhibitory chain (gamma) and the delta chain. The cofactor is a divalent metal cation.

It is found in the cell membrane. The protein resides in the cell projection. Its subcellular location is the cilium. The protein localises to the photoreceptor outer segment. It catalyses the reaction 3',5'-cyclic GMP + H2O = GMP + H(+). Rod-specific cGMP phosphodiesterase that catalyzes the hydrolysis of 3',5'-cyclic GMP. This protein participates in processes of transmission and amplification of the visual signal. This chain is Rod cGMP-specific 3',5'-cyclic phosphodiesterase subunit alpha, found in Canis lupus familiaris (Dog).